Consider the following 445-residue polypeptide: T-box transcription factor TBX19 (445 aa).

A DNA-binding region (T-box) is located at residues 45-218 (LEDAPLWQRF…YNPFAKAFLD (174 aa)).

It is found in the nucleus. In terms of biological role, transcriptional regulator involved in developmental processes. Can activate POMC gene expression and repress the alpha glycoprotein subunit and thyroid-stimulating hormone beta promoters. The chain is T-box transcription factor TBX19 from Canis lupus familiaris (Dog).